Consider the following 259-residue polypeptide: Polycomb group RING finger protein 1 (259 aa).

Residues 45–84 (CYLCAGYFIDATTITECLHTFCKSCIVKYLQTSKYCPLCN) form an RING-type zinc finger.

In terms of assembly, component of a PRC1-like complex.

The protein resides in the nucleus. Component of a Polycomb group (PcG) multiprotein PRC1-like complex, a complex class required to maintain the transcriptionally repressive state of many genes, including Hox genes, throughout development. PcG PRC1 complex acts via chromatin remodeling and modification of histones; it mediates monoubiquitination of histone H2A 'Lys-119', rendering chromatin heritably changed in its expressibility. The protein is Polycomb group RING finger protein 1 (pcgf1) of Xenopus laevis (African clawed frog).